The sequence spans 342 residues: Phosphoribosylformylglycinamidine cyclo-ligase (342 aa).

The protein belongs to the AIR synthase family.

The protein resides in the cytoplasm. The catalysed reaction is 2-formamido-N(1)-(5-O-phospho-beta-D-ribosyl)acetamidine + ATP = 5-amino-1-(5-phospho-beta-D-ribosyl)imidazole + ADP + phosphate + H(+). It functions in the pathway purine metabolism; IMP biosynthesis via de novo pathway; 5-amino-1-(5-phospho-D-ribosyl)imidazole from N(2)-formyl-N(1)-(5-phospho-D-ribosyl)glycinamide: step 2/2. In Staphylococcus aureus (strain MRSA252), this protein is Phosphoribosylformylglycinamidine cyclo-ligase.